The sequence spans 159 residues: Ecotin (159 aa).

The signal sequence occupies residues 1 to 22; the sequence is MRPTPMTAILALTLAAAAPAMA. A disulfide bridge connects residues C68 and C105.

The protein belongs to the protease inhibitor I11 (ecotin) family. Homodimer.

It localises to the periplasm. General inhibitor of family S1 serine proteases. The polypeptide is Ecotin (Pseudomonas putida (strain GB-1)).